The chain runs to 141 residues: Large ribosomal subunit protein uL16 (141 aa).

This sequence belongs to the universal ribosomal protein uL16 family. Part of the 50S ribosomal subunit.

Binds 23S rRNA and is also seen to make contacts with the A and possibly P site tRNAs. This chain is Large ribosomal subunit protein uL16, found in Campylobacter lari (strain RM2100 / D67 / ATCC BAA-1060).